A 642-amino-acid polypeptide reads, in one-letter code: Threonine--tRNA ligase (642 aa).

Residues 1–61 enclose the TGS domain; the sequence is MPVITLPDGS…DTDSELSIIT (61 aa). A catalytic region spans residues 243-534; the sequence is DHRKIGKQLD…LIEEYAGKFP (292 aa). Zn(2+) contacts are provided by cysteine 334, histidine 385, and histidine 511.

It belongs to the class-II aminoacyl-tRNA synthetase family. As to quaternary structure, homodimer. Zn(2+) serves as cofactor.

The protein localises to the cytoplasm. The catalysed reaction is tRNA(Thr) + L-threonine + ATP = L-threonyl-tRNA(Thr) + AMP + diphosphate + H(+). Its function is as follows. Catalyzes the attachment of threonine to tRNA(Thr) in a two-step reaction: L-threonine is first activated by ATP to form Thr-AMP and then transferred to the acceptor end of tRNA(Thr). Also edits incorrectly charged L-seryl-tRNA(Thr). This Shewanella woodyi (strain ATCC 51908 / MS32) protein is Threonine--tRNA ligase.